A 139-amino-acid polypeptide reads, in one-letter code: MAVERTLSLIKPDAVKRHLIGAILSRFEQAGFRVVAAKMLHLTQAQAEGFYAEHQDKAFFPELVAYMISAPVLALVLEKENAVKDYRTLIGATNPAVAAEGTIRRDFAIDGRHNSVHGSDSLDSAKREIAYFFVESEIF.

The ATP site is built by Lys-11, Phe-59, Arg-87, Thr-93, Arg-104, and Asn-114. His-117 acts as the Pros-phosphohistidine intermediate in catalysis.

The protein belongs to the NDK family. In terms of assembly, homotetramer. It depends on Mg(2+) as a cofactor.

It localises to the cytoplasm. It catalyses the reaction a 2'-deoxyribonucleoside 5'-diphosphate + ATP = a 2'-deoxyribonucleoside 5'-triphosphate + ADP. The enzyme catalyses a ribonucleoside 5'-diphosphate + ATP = a ribonucleoside 5'-triphosphate + ADP. Its function is as follows. Major role in the synthesis of nucleoside triphosphates other than ATP. The ATP gamma phosphate is transferred to the NDP beta phosphate via a ping-pong mechanism, using a phosphorylated active-site intermediate. The polypeptide is Nucleoside diphosphate kinase (Pasteurella multocida (strain Pm70)).